The sequence spans 459 residues: APSYPRYTREEVGRHRSPEERVWVTHGTDVFDVTDFVELHPGGPDKILLAAGGALEPFWALYAVHGEPHVLELLQQYKVGELSPDEAPAAPDAQDPFAGDPPRHPGLRVNSQKPFNAEPPAELLAERFLTPNELFFTRNHLPVPAVEPSSYRLRVDGPGGRTLSLSLAELRSRFPKHEVTATLQCAGNRRSEMSRVRPVKGLPWDIGAISTARWGGASLRDVLLHAGFPEELQGGEHVCFEGLDADPGGAPYGASIPYGRALSPAADVLLAYEMNGTELPRDHRFPVRVVVPGVVGARSVKWLRRVAVSPDESPSRWQQNDYKGFSPCVDWDTVDYRTAPAIQELPVQSAVTQPRPGAAVPPGELTVKGYAWSGGGREVVRVDVSLDGGRTWKVARLMGDKAPPGRAWAWALWELTVPVEAGTELEIVCKAVDSSYNVQPDSVAPIWNLRGVLSTAWHR.

The Cytochrome b5 heme-binding domain maps to 4–83 (YPRYTREEVG…LQQYKVGELS (80 aa)). Residues His-40, His-65, and His-69 each contribute to the heme b site. The segment at 83 to 115 (SPDEAPAAPDAQDPFAGDPPRHPGLRVNSQKPF) is disordered. Residues 85-100 (DEAPAAPDAQDPFAGD) are compositionally biased toward low complexity. Residues 86-95 (EAPAAPDAQD) are hinge. A moco domain region spans residues 96 to 323 (PFAGDPPRHP…PSRWQQNDYK (228 aa)). Residues 136-140 (FTRNH), Cys-185, Asp-244, His-283, Arg-288, and 299-301 (SVK) each bind Mo-molybdopterin. The segment at 324–459 (GFSPCVDWDT…RGVLSTAWHR (136 aa)) is homodimerization.

In terms of assembly, homodimer. It depends on heme b as a cofactor. The cofactor is Mo-molybdopterin.

Its subcellular location is the mitochondrion intermembrane space. The enzyme catalyses sulfite + O2 + H2O = sulfate + H2O2. Its pathway is energy metabolism; sulfur metabolism. Functionally, catalyzes the oxidation of sulfite to sulfate, the terminal reaction in the oxidative degradation of sulfur-containing amino acids. This Gallus gallus (Chicken) protein is Sulfite oxidase (SUOX).